Reading from the N-terminus, the 156-residue chain is Transcription antitermination protein NusB (156 aa).

This sequence belongs to the NusB family.

Its function is as follows. Involved in transcription antitermination. Required for transcription of ribosomal RNA (rRNA) genes. Binds specifically to the boxA antiterminator sequence of the ribosomal RNA (rrn) operons. This is Transcription antitermination protein NusB from Syntrophotalea carbinolica (strain DSM 2380 / NBRC 103641 / GraBd1) (Pelobacter carbinolicus).